The sequence spans 492 residues: Protein nucleotidyltransferase YdiU (492 aa).

8 residues coordinate ATP: Gly101, Gly103, Arg104, Lys124, Asp136, Gly137, Arg187, and Arg194. Residue Asp268 is the Proton acceptor of the active site. Asn269 and Asp278 together coordinate Mg(2+). Asp278 serves as a coordination point for ATP.

This sequence belongs to the SELO family. It depends on Mg(2+) as a cofactor. Requires Mn(2+) as cofactor.

The catalysed reaction is L-seryl-[protein] + ATP = 3-O-(5'-adenylyl)-L-seryl-[protein] + diphosphate. The enzyme catalyses L-threonyl-[protein] + ATP = 3-O-(5'-adenylyl)-L-threonyl-[protein] + diphosphate. It carries out the reaction L-tyrosyl-[protein] + ATP = O-(5'-adenylyl)-L-tyrosyl-[protein] + diphosphate. It catalyses the reaction L-histidyl-[protein] + UTP = N(tele)-(5'-uridylyl)-L-histidyl-[protein] + diphosphate. The catalysed reaction is L-seryl-[protein] + UTP = O-(5'-uridylyl)-L-seryl-[protein] + diphosphate. The enzyme catalyses L-tyrosyl-[protein] + UTP = O-(5'-uridylyl)-L-tyrosyl-[protein] + diphosphate. Functionally, nucleotidyltransferase involved in the post-translational modification of proteins. It can catalyze the addition of adenosine monophosphate (AMP) or uridine monophosphate (UMP) to a protein, resulting in modifications known as AMPylation and UMPylation. The sequence is that of Protein nucleotidyltransferase YdiU from Corynebacterium efficiens (strain DSM 44549 / YS-314 / AJ 12310 / JCM 11189 / NBRC 100395).